Consider the following 263-residue polypeptide: tRNA1(Val) (adenine(37)-N6)-methyltransferase (263 aa).

Belongs to the methyltransferase superfamily. tRNA (adenine-N(6)-)-methyltransferase family.

The protein resides in the cytoplasm. It catalyses the reaction adenosine(37) in tRNA1(Val) + S-adenosyl-L-methionine = N(6)-methyladenosine(37) in tRNA1(Val) + S-adenosyl-L-homocysteine + H(+). Its function is as follows. Specifically methylates the adenine in position 37 of tRNA(1)(Val) (anticodon cmo5UAC). This chain is tRNA1(Val) (adenine(37)-N6)-methyltransferase, found in Salmonella choleraesuis (strain SC-B67).